A 358-amino-acid chain; its full sequence is Peptide chain release factor 1 (358 aa).

Gln233 carries the post-translational modification N5-methylglutamine.

It belongs to the prokaryotic/mitochondrial release factor family. In terms of processing, methylated by PrmC. Methylation increases the termination efficiency of RF1.

It is found in the cytoplasm. Functionally, peptide chain release factor 1 directs the termination of translation in response to the peptide chain termination codons UAG and UAA. In Macrococcus caseolyticus (strain JCSC5402) (Macrococcoides caseolyticum), this protein is Peptide chain release factor 1.